The primary structure comprises 324 residues: Muscleblind-like protein (324 aa).

2 consecutive C3H1-type zinc fingers follow at residues 38–66 (WLQV…HPPP) and 72–100 (QGRV…HPPQ).

Belongs to the muscleblind family. In terms of tissue distribution, expressed in neurons around the pharynx.

It localises to the nucleus. Functionally, binds to RNA with repeat sequences 5'-CUG-3' and 5'-CCUG-3'. The chain is Muscleblind-like protein (mbl-1) from Caenorhabditis elegans.